A 149-amino-acid chain; its full sequence is D-aminoacyl-tRNA deacylase (149 aa).

Residues 137-138 (GP) carry the Gly-cisPro motif, important for rejection of L-amino acids motif.

This sequence belongs to the DTD family. As to quaternary structure, homodimer.

The protein localises to the cytoplasm. It catalyses the reaction glycyl-tRNA(Ala) + H2O = tRNA(Ala) + glycine + H(+). The catalysed reaction is a D-aminoacyl-tRNA + H2O = a tRNA + a D-alpha-amino acid + H(+). An aminoacyl-tRNA editing enzyme that deacylates mischarged D-aminoacyl-tRNAs. Also deacylates mischarged glycyl-tRNA(Ala), protecting cells against glycine mischarging by AlaRS. Acts via tRNA-based rather than protein-based catalysis; rejects L-amino acids rather than detecting D-amino acids in the active site. By recycling D-aminoacyl-tRNA to D-amino acids and free tRNA molecules, this enzyme counteracts the toxicity associated with the formation of D-aminoacyl-tRNA entities in vivo and helps enforce protein L-homochirality. The sequence is that of D-aminoacyl-tRNA deacylase from Syntrophobacter fumaroxidans (strain DSM 10017 / MPOB).